Reading from the N-terminus, the 63-residue chain is Large ribosomal subunit protein bL28 (63 aa).

Belongs to the bacterial ribosomal protein bL28 family.

The sequence is that of Large ribosomal subunit protein bL28 from Dictyoglomus thermophilum (strain ATCC 35947 / DSM 3960 / H-6-12).